Here is a 397-residue protein sequence, read N- to C-terminus: Carnitine transport ATP-binding protein OpuCA (397 aa).

The ABC transporter domain maps to leucine 2 to isoleucine 236. Glycine 35–threonine 42 contacts ATP. CBS domains lie at methionine 255–valine 311 and isoleucine 315–leucine 373. Positions threonine 377–glycine 397 are disordered. Basic and acidic residues predominate over residues alanine 384–glycine 397.

The protein belongs to the ABC transporter superfamily. In terms of assembly, the complex is composed of two ATP-binding proteins (OpuCA), two transmembrane proteins (OpuCB and OpuCD) and a solute-binding protein (OpuCC).

The catalysed reaction is a quaternary ammonium(out) + ATP + H2O = a quaternary ammonium(in) + ADP + phosphate + H(+). Part of the ABC transporter complex OpuCABCD involved in carnitine uptake. Probably responsible for energy coupling to the transport system. Involved, with BetL and GbuABC, in osmoprotection and cryoprotection of Listeria. Can also mediate weak glycine betaine transport. This chain is Carnitine transport ATP-binding protein OpuCA (opuCA), found in Listeria monocytogenes serotype 1/2a (strain 10403S).